The sequence spans 213 residues: Mediator of RNA polymerase II transcription subunit 7 (213 aa).

The interval 96–120 (TELENGTTTEVEPSPQDSQSGTNYE) is disordered. A compositionally biased stretch (polar residues) spans 97-120 (ELENGTTTEVEPSPQDSQSGTNYE).

Belongs to the Mediator complex subunit 7 family. In terms of assembly, component of the Mediator complex.

It is found in the nucleus. Functionally, component of the Mediator complex, a coactivator involved in the regulated transcription of nearly all RNA polymerase II-dependent genes. Mediator functions as a bridge to convey information from gene-specific regulatory proteins to the basal RNA polymerase II transcription machinery. Mediator is recruited to promoters by direct interactions with regulatory proteins and serves as a scaffold for the assembly of a functional preinitiation complex with RNA polymerase II and the general transcription factors. This Kluyveromyces lactis (strain ATCC 8585 / CBS 2359 / DSM 70799 / NBRC 1267 / NRRL Y-1140 / WM37) (Yeast) protein is Mediator of RNA polymerase II transcription subunit 7 (MED7).